A 316-amino-acid polypeptide reads, in one-letter code: Epoxide hydrolase 3 (316 aa).

One can recognise an AB hydrolase-1 domain in the interval 25-302 (PVVLLLHGFP…ACHFINQERP (278 aa)). The active-site Nucleophile is the D101. Position 150 (Y150) interacts with an epoxide. Y230 acts as the Proton donor in catalysis. H295 serves as the catalytic Proton acceptor.

It belongs to the AB hydrolase superfamily. Epoxide hydrolase family. In terms of assembly, homodimer. In terms of tissue distribution, highly expressed in young fruits 15 days after anthesis (15-DAA).

It catalyses the reaction an epoxide + H2O = an ethanediol. The catalysed reaction is (24S)-24,25-epoxycucurbitadienol + H2O = (24R)-24,25-dihydroxycucurbitadienol. It functions in the pathway secondary metabolite biosynthesis; terpenoid biosynthesis. In terms of biological role, epoxide hydrolase involved in the biosynthesis of cucurbitacin and mogroside tetracyclic triterpene natural products (e.g. siamenoside I and mogrosides IV, V and VI). Cucurbitacins have cytotoxic properties and exhibit deterrent taste as a defense barrier against herbivores. Mogrosides are nonsugar highly oxygenated compounds used as high-intensity zero-calorie sweeteners; they also possess pharmacological properties such as regulating immunity, lowering blood sugar and lipid levels, protecting the liver, and acting as antioxidants and antitumor agents. Catalyzes the hydrolysis of aromatic epoxide-containing substrates, such as the conversion of 24,25-epoxycucurbitadienol to 24,25-dihydroxycucurbitadienol. This Siraitia grosvenorii (Monk's fruit) protein is Epoxide hydrolase 3.